Here is an 892-residue protein sequence, read N- to C-terminus: Putative ubiquitin carboxyl-terminal hydrolase 11 (892 aa).

Residues 17–132 (YTPEEERRIV…GGPPVPRKLI (116 aa)) form the DUSP domain. Residues 69–89 (EPSEVTRPGPIDNHDIIDSES) are disordered. The 580-residue stretch at 301 to 880 (GGLQNLGNTC…AAYVLFYQRV (580 aa)) folds into the USP domain. C310 (nucleophile) is an active-site residue. A disordered region spans residues 636-660 (NSGNENGHVPDESSRSILSRDTETE). Residues 643 to 657 (HVPDESSRSILSRDT) show a composition bias toward basic and acidic residues. The Proton acceptor role is filled by H838.

The protein belongs to the peptidase C19 family.

It carries out the reaction Thiol-dependent hydrolysis of ester, thioester, amide, peptide and isopeptide bonds formed by the C-terminal Gly of ubiquitin (a 76-residue protein attached to proteins as an intracellular targeting signal).. Functionally, recognizes and hydrolyzes the peptide bond at the C-terminal Gly of ubiquitin. Involved in the processing of poly-ubiquitin precursors as well as that of ubiquitinated proteins. The sequence is that of Putative ubiquitin carboxyl-terminal hydrolase 11 (UBP11) from Arabidopsis thaliana (Mouse-ear cress).